The following is an 86-amino-acid chain: Toxin Cn1 (86 aa).

Residues 1 to 19 (MNSLLMITACFVLIGTVWA) form the signal peptide. Residues 20–84 (KDGYLVDAKG…TWPLPNKTCS (65 aa)) enclose the LCN-type CS-alpha/beta domain. Disulfide bonds link C30/C83, C34/C59, C43/C64, and C47/C66. Residue S84 is modified to Serine amide.

This sequence belongs to the long (4 C-C) scorpion toxin superfamily. Sodium channel inhibitor family. Beta subfamily. In terms of tissue distribution, expressed by the venom gland.

Its subcellular location is the secreted. Beta toxins bind voltage-independently at site-4 of sodium channels (Nav) and shift the voltage of activation toward more negative potentials thereby affecting sodium channel activation and promoting spontaneous and repetitive firing. The polypeptide is Toxin Cn1 (Centruroides noxius (Mexican scorpion)).